The sequence spans 331 residues: Glucokinase (331 aa).

13-18 (GDIGGT) is a binding site for ATP.

It belongs to the bacterial glucokinase family.

The protein resides in the cytoplasm. The enzyme catalyses D-glucose + ATP = D-glucose 6-phosphate + ADP + H(+). This chain is Glucokinase, found in Caulobacter vibrioides (strain ATCC 19089 / CIP 103742 / CB 15) (Caulobacter crescentus).